The sequence spans 431 residues: Serine--tRNA ligase (431 aa).

238 to 240 (TAE) is a binding site for L-serine. 269 to 271 (RSE) is an ATP binding site. Glu292 lines the L-serine pocket. ATP is bound at residue 356–359 (EISS). Ser392 contacts L-serine.

The protein belongs to the class-II aminoacyl-tRNA synthetase family. Type-1 seryl-tRNA synthetase subfamily. In terms of assembly, homodimer. The tRNA molecule binds across the dimer.

The protein resides in the cytoplasm. It carries out the reaction tRNA(Ser) + L-serine + ATP = L-seryl-tRNA(Ser) + AMP + diphosphate + H(+). It catalyses the reaction tRNA(Sec) + L-serine + ATP = L-seryl-tRNA(Sec) + AMP + diphosphate + H(+). It functions in the pathway aminoacyl-tRNA biosynthesis; selenocysteinyl-tRNA(Sec) biosynthesis; L-seryl-tRNA(Sec) from L-serine and tRNA(Sec): step 1/1. Functionally, catalyzes the attachment of serine to tRNA(Ser). Is also able to aminoacylate tRNA(Sec) with serine, to form the misacylated tRNA L-seryl-tRNA(Sec), which will be further converted into selenocysteinyl-tRNA(Sec). The polypeptide is Serine--tRNA ligase (Pectobacterium carotovorum subsp. carotovorum (strain PC1)).